We begin with the raw amino-acid sequence, 108 residues long: KSAPKHEWIGKNSASWALCRCNNNWVVRHNSKEIPIEPAPHLRRVGILLDYDNGSIAFYDALNSIHLYTFDVALAQPVCPTFTVWNKCLTIITGLPIPDHLDCTEQLP.

The 100-residue stretch at Lys-1 to His-100 folds into the B30.2/SPRY domain.

The protein belongs to the TRIM/RBCC family. In terms of assembly, homodimer or heterodimer with MID2. Interacts with IGBP1.

The protein resides in the cytoplasm. The protein localises to the cytoskeleton. It catalyses the reaction S-ubiquitinyl-[E2 ubiquitin-conjugating enzyme]-L-cysteine + [acceptor protein]-L-lysine = [E2 ubiquitin-conjugating enzyme]-L-cysteine + N(6)-ubiquitinyl-[acceptor protein]-L-lysine.. Functionally, has E3 ubiquitin ligase activity towards IGBP1, promoting its monoubiquitination, which results in deprotection of the catalytic subunit of protein phosphatase PP2A, and its subsequent degradation by polyubiquitination. This is E3 ubiquitin-protein ligase Midline-1 (Mid1) from Mus caroli (Ryukyu mouse).